The primary structure comprises 308 residues: F-actin-capping protein subunit alpha (308 aa).

It belongs to the F-actin-capping protein alpha subunit family. Component of the F-actin capping complex, composed of a heterodimer of an alpha and a beta subunit.

In terms of biological role, F-actin-capping proteins bind in a Ca(2+)-independent manner to the fast growing ends of actin filaments (barbed end) thereby blocking the exchange of subunits at these ends. Unlike other capping proteins (such as gelsolin and severin), these proteins do not sever actin filaments. The chain is F-actin-capping protein subunit alpha from Arabidopsis thaliana (Mouse-ear cress).